The chain runs to 896 residues: Translation initiation factor IF-2 (896 aa).

The segment covering 93-219 (VKRDPQEAER…RMAEENEKNW (127 aa)) has biased composition (basic and acidic residues). The segment at 93-307 (VKRDPQEAER…GSALQQGFQK (215 aa)) is disordered. Over residues 256–271 (GRSRSSKAARPAKKGN) the composition is skewed to basic residues. Basic and acidic residues predominate over residues 272 to 285 (KHAESKADREEARA). Residues 395–564 (PRAPVVTIMG…LLQAEVLELK (170 aa)) enclose the tr-type G domain. Positions 404 to 411 (GHVDHGKT) are G1. 404–411 (GHVDHGKT) is a GTP binding site. The G2 stretch occupies residues 429–433 (GITQH). Residues 450–453 (DTPG) form a G3 region. Residues 450 to 454 (DTPGH) and 504 to 507 (NKID) contribute to the GTP site. The G4 stretch occupies residues 504-507 (NKID). Positions 540 to 542 (SAK) are G5.

The protein belongs to the TRAFAC class translation factor GTPase superfamily. Classic translation factor GTPase family. IF-2 subfamily.

It localises to the cytoplasm. Its function is as follows. One of the essential components for the initiation of protein synthesis. Protects formylmethionyl-tRNA from spontaneous hydrolysis and promotes its binding to the 30S ribosomal subunits. Also involved in the hydrolysis of GTP during the formation of the 70S ribosomal complex. The polypeptide is Translation initiation factor IF-2 (Klebsiella pneumoniae (strain 342)).